Here is a 129-residue protein sequence, read N- to C-terminus: uncharacterized protein (129 aa).

This is an uncharacterized protein from Mycoplasma genitalium (strain ATCC 33530 / DSM 19775 / NCTC 10195 / G37) (Mycoplasmoides genitalium).